Here is a 371-residue protein sequence, read N- to C-terminus: Tetraacyldisaccharide 4'-kinase (371 aa).

Position 63-70 (63-70) interacts with ATP; it reads AVGGAGKT.

This sequence belongs to the LpxK family.

The enzyme catalyses a lipid A disaccharide + ATP = a lipid IVA + ADP + H(+). Its pathway is glycolipid biosynthesis; lipid IV(A) biosynthesis; lipid IV(A) from (3R)-3-hydroxytetradecanoyl-[acyl-carrier-protein] and UDP-N-acetyl-alpha-D-glucosamine: step 6/6. Functionally, transfers the gamma-phosphate of ATP to the 4'-position of a tetraacyldisaccharide 1-phosphate intermediate (termed DS-1-P) to form tetraacyldisaccharide 1,4'-bis-phosphate (lipid IVA). In Anaeromyxobacter sp. (strain Fw109-5), this protein is Tetraacyldisaccharide 4'-kinase.